Reading from the N-terminus, the 248-residue chain is mRNA-decapping protein OPG122 (248 aa).

One can recognise a Nudix hydrolase domain in the interval 45 to 227; the sequence is HKRVSVSAIL…IAKYALDTAK (183 aa). A Nudix box motif is present at residues 126–147; it reads GIPKRGENVPECLSREIKEEVN. Glu132 lines the Mg(2+) pocket. The active-site Nucleophile is the Glu141. Residue Glu145 coordinates Mn(2+). Asp167 provides a ligand contact to Mg(2+).

This sequence belongs to the Nudix hydrolase family. Mg(2+) is required as a cofactor. The cofactor is Mn(2+).

It localises to the host mitochondrion. Decapping enzyme that remove the protective 5'-cap from both host and viral mRNAs to commit transcripts for decay by the cellular exonuclease XRN1. Preferentially targets spliced mRNAs and since all viral genes are intronless, it preferentially targets host over viral transcripts. Acceleration of the turnover of cellular transcripts promotes the shutoff of host protein synthesis and therefore diminish the magnitude of antiviral response. In Vaccinia virus (strain Copenhagen) (VACV), this protein is mRNA-decapping protein OPG122 (OPG122).